The primary structure comprises 1486 residues: Rap guanine nucleotide exchange factor 2 (1486 aa).

Disordered regions lie at residues 40–59 (HVSSSHSGCSITSDSGSSSL) and 68–101 (SEAGDMDLSGLPETAVDSEDDDDEEDIERASDPL). Residues 83–94 (VDSEDDDDEEDI) are compositionally biased toward acidic residues. 135-252 (AFANMTMSVR…QKVEEEGEIV (118 aa)) contacts a nucleoside 3',5'-cyclic phosphate. An N-terminal Ras-GEF domain is found at 267-380 (KGHIVIKGTS…RLLNIACAAK (114 aa)). The PDZ domain maps to 385-468 (LMTLTKPARE…LSITVKTNLF (84 aa)). Phosphoserine is present on serine 501. Residues 606-692 (PDQVLRVFKA…GRYYLKNNME (87 aa)) enclose the Ras-associating domain. The residue at position 644 (threonine 644) is a Phosphothreonine. In terms of domain architecture, Ras-GEF spans 717-944 (STVEVATQLS…SQGSTNATVL (228 aa)). A phosphoserine mark is found at serine 806, serine 930, serine 933, and serine 1022. Residues 1002-1049 (PATNTLPKNPTDKKPVKSETSPVAPRAGLQPKAQPQPQPPQPPHKLNQ) form a disordered region. Pro residues predominate over residues 1035 to 1044 (QPQPQPPQPP). Residues serine 1077, serine 1086, serine 1092, serine 1113, serine 1117, serine 1156, and serine 1173 each carry the phosphoserine modification. Disordered regions lie at residues 1090–1176 (EGSL…SVSI), 1221–1254 (PSTEELSQDQGDRASLDAADSGRGSWTSCSSGSH), 1303–1357 (KYSR…DSSS), and 1391–1486 (GRYR…VSAV). Composition is skewed to low complexity over residues 1105 to 1122 (SNTSSQLSSPPTSPQSSP) and 1138 to 1159 (SDSGHSEISSRSSIVSNSSFDS). Composition is skewed to polar residues over residues 1244–1254 (GSWTSCSSGSH) and 1304–1328 (YSRQSQSRESLDQAQSRASWASSTG). Positions 1475–1486 (AEEDEDEQVSAV) are enriched in acidic residues.

It belongs to the RAPGEF2 family. As to quaternary structure, found in a complex, at least composed of KIDINS220, MAGI2, NTRK1 and RAPGEF2; the complex is mainly formed at late endosomes in a neuronal growth factor (NGF)-dependent manner. Interacts (via C-terminal domain) with NEDD4 (via WW domains); this interaction leads to ubiquitination and degradation via the proteasome pathway in a cAMP-independent manner. Interacts with MAGI1 (via PDZ domain). Interacts with ADRB1 (via C-terminal PDZ motif); the interaction is direct. Interacts (via Ras-associating domain) with RAP1A (via GTP-bound active form). Interacts weakly with HRAS (via GDP- and GTP-bound forms). Interacts (via C-terminal domain) with MAGI2 (via PDZ and WW domains). Interacts with CDH1 and TJP1. Interacts with CTNNB1. Post-translationally, ubiquitinated by NEDD4, leading to proteasomal degradation. Phosphorylation by PLK2 promotes its activity.

It localises to the cytoplasm. The protein resides in the perinuclear region. It is found in the cell membrane. Its subcellular location is the late endosome. The protein localises to the cell junction. Its function is as follows. Functions as a guanine nucleotide exchange factor (GEF), which activates Rap and Ras family of small GTPases by exchanging bound GDP for free GTP in a cAMP-dependent manner. Serves as a link between cell surface receptors and Rap/Ras GTPases in intracellular signaling cascades. Also acts as an effector for Rap1 by direct association with Rap1-GTP thereby leading to the amplification of Rap1-mediated signaling. Shows weak activity on HRAS. It is controversial whether RAPGEF2 binds cAMP and cGMP or not. Its binding to ligand-activated beta-1 adrenergic receptor ADRB1 leads to the Ras activation through the G(s)-alpha signaling pathway. Involved in the cAMP-induced Ras and Erk1/2 signaling pathway that leads to sustained inhibition of long term melanogenesis by reducing dendrite extension and melanin synthesis. Also provides inhibitory signals for cell proliferation of melanoma cells and promotes their apoptosis in a cAMP-independent nanner. Regulates cAMP-induced neuritogenesis by mediating the Rap1/B-Raf/ERK signaling through a pathway that is independent on both PKA and RAPGEF3/RAPGEF4. Involved in neuron migration and in the formation of the major forebrain fiber connections forming the corpus callosum, the anterior commissure and the hippocampal commissure during brain development. Involved in neuronal growth factor (NGF)-induced sustained activation of Rap1 at late endosomes and in brain-derived neurotrophic factor (BDNF)-induced axon outgrowth of hippocampal neurons. Plays a role in the regulation of embryonic blood vessel formation and in the establishment of basal junction integrity and endothelial barrier function. May be involved in the regulation of the vascular endothelial growth factor receptor KDR and cadherin CDH5 expression at allantois endothelial cell-cell junctions. Binds to cAMP. This Bos taurus (Bovine) protein is Rap guanine nucleotide exchange factor 2 (RAPGEF2).